Here is a 937-residue protein sequence, read N- to C-terminus: Bifunctional glutamine synthetase adenylyltransferase/adenylyl-removing enzyme (937 aa).

The segment at 1–436 (MSQPIPSASP…AAEFAELLAP (436 aa)) is adenylyl removase. Positions 443–937 (PDTLADYWRA…QLRFQPGKGA (495 aa)) are adenylyl transferase.

This sequence belongs to the GlnE family. Mg(2+) serves as cofactor.

It carries out the reaction [glutamine synthetase]-O(4)-(5'-adenylyl)-L-tyrosine + phosphate = [glutamine synthetase]-L-tyrosine + ADP. It catalyses the reaction [glutamine synthetase]-L-tyrosine + ATP = [glutamine synthetase]-O(4)-(5'-adenylyl)-L-tyrosine + diphosphate. Functionally, involved in the regulation of glutamine synthetase GlnA, a key enzyme in the process to assimilate ammonia. When cellular nitrogen levels are high, the C-terminal adenylyl transferase (AT) inactivates GlnA by covalent transfer of an adenylyl group from ATP to specific tyrosine residue of GlnA, thus reducing its activity. Conversely, when nitrogen levels are low, the N-terminal adenylyl removase (AR) activates GlnA by removing the adenylyl group by phosphorolysis, increasing its activity. The regulatory region of GlnE binds the signal transduction protein PII (GlnB) which indicates the nitrogen status of the cell. In Xanthomonas campestris pv. campestris (strain ATCC 33913 / DSM 3586 / NCPPB 528 / LMG 568 / P 25), this protein is Bifunctional glutamine synthetase adenylyltransferase/adenylyl-removing enzyme.